The chain runs to 158 residues: Style cell-cycle inhibitor 1-B (158 aa).

2 stretches are compositionally biased toward basic and acidic residues: residues 1–11 (MGSDKKTTEEK) and 22–47 (PRDEVKSKRQNIKGDEERRKEKDKSK). The disordered stretch occupies residues 1–88 (MGSDKKTTEE…DKSKNKFEEL (88 aa)). Composition is skewed to basic residues over residues 48–58 (KEKHKSHKSKC) and 67–81 (GEKHKTKSHKHKDKS).

In terms of tissue distribution, specifically expressed in flowers pistils, especially in stigmas and styles. Barely detected in roots, stems, leaves, sepals, petals and stamen.

The protein localises to the nucleus. Its function is as follows. Component of the auxin signaling transduction pathway that regulates cell proliferation and differentiation during flowers stigmas and styles development. Involved in the regulation of auxin-related genes. The polypeptide is Style cell-cycle inhibitor 1-B (Nicotiana tabacum (Common tobacco)).